We begin with the raw amino-acid sequence, 344 residues long: Uroporphyrinogen decarboxylase (344 aa).

Substrate contacts are provided by residues 26 to 30 (RQAGR), F45, D75, Y151, S206, and H320.

The protein belongs to the uroporphyrinogen decarboxylase family. Homodimer.

It is found in the cytoplasm. The catalysed reaction is uroporphyrinogen III + 4 H(+) = coproporphyrinogen III + 4 CO2. It functions in the pathway porphyrin-containing compound metabolism; protoporphyrin-IX biosynthesis; coproporphyrinogen-III from 5-aminolevulinate: step 4/4. Its function is as follows. Catalyzes the decarboxylation of four acetate groups of uroporphyrinogen-III to yield coproporphyrinogen-III. This is Uroporphyrinogen decarboxylase from Staphylococcus saprophyticus subsp. saprophyticus (strain ATCC 15305 / DSM 20229 / NCIMB 8711 / NCTC 7292 / S-41).